Consider the following 960-residue polypeptide: Phosphoenolpyruvate carboxylase 1 (960 aa).

Phosphoserine is present on Ser7. Catalysis depends on residues His168 and Lys596.

Belongs to the PEPCase type 1 family. As to quaternary structure, homotetramer. Mg(2+) serves as cofactor.

The protein localises to the cytoplasm. It catalyses the reaction oxaloacetate + phosphate = phosphoenolpyruvate + hydrogencarbonate. It participates in photosynthesis; C3 acid pathway. By light-reversible phosphorylation. Through the carboxylation of phosphoenolpyruvate (PEP) it forms oxaloacetate, a four-carbon dicarboxylic acid source for the tricarboxylic acid cycle. This Sorghum bicolor (Sorghum) protein is Phosphoenolpyruvate carboxylase 1 (PEPC).